The primary structure comprises 717 residues: Radial spoke head protein 6 homolog A (717 aa).

4 disordered regions span residues 1–65, 503–523, 563–588, and 672–717; these read MGDL…SLSQ, SEEEGDEEEEGGAGRDSYEEN, TEEEEDLGEEEEKADEGPEEVEQEVG, and GPEI…ETDD. Composition is skewed to acidic residues over residues 503-513, 564-585, and 700-717; these read SEEEGDEEEEG, EEEEDLGEEEEKADEGPEEVEQ, and TEEEEEGEEEEEGEETDD.

Belongs to the flagellar radial spoke RSP4/6 family. Component of the axonemal radial spoke 1 (RS1) and 2 (RS2) complexes, at least composed of spoke head proteins RSPH1, RSPH3, RSPH9 and the cilia-specific component RSPH4A or sperm-specific component RSPH6A, spoke stalk proteins RSPH14, DNAJB13, DYDC1, ROPN1L and NME5, and the RS1 complex-specific anchor protein IQUB. Interacts with RSPH1. Interacts with RSPH3B. Interacts with RSPH4A. Interacts with RSPH9. Interacts with RSPH10B. In terms of processing, phosphorylated by PKA. Phosphorylation increases in capacitated sperm.

The protein resides in the cytoplasm. Its subcellular location is the cytoskeleton. It localises to the flagellum axoneme. Its function is as follows. Functions as part of radial spoke complexes in the axoneme of sperm flagella that play an important part in motility. The triple radial spokes (RS1, RS2 and RS3) are required to modulate beating of the sperm flagellum. This Homo sapiens (Human) protein is Radial spoke head protein 6 homolog A.